The following is a 384-amino-acid chain: S-adenosylmethionine synthase (384 aa).

Histidine 15 is an ATP binding site. Aspartate 17 is a Mg(2+) binding site. Glutamate 43 serves as a coordination point for K(+). L-methionine contacts are provided by glutamate 56 and glutamine 99. Residues 99–109 (QSPDINQGVDR) form a flexible loop region. ATP contacts are provided by residues 164-166 (DAK), 231-232 (RF), aspartate 240, 246-247 (RK), alanine 263, and lysine 267. Residue aspartate 240 coordinates L-methionine. Lysine 271 provides a ligand contact to L-methionine.

It belongs to the AdoMet synthase family. In terms of assembly, homotetramer; dimer of dimers. The cofactor is Mg(2+). K(+) serves as cofactor.

The protein resides in the cytoplasm. The enzyme catalyses L-methionine + ATP + H2O = S-adenosyl-L-methionine + phosphate + diphosphate. It participates in amino-acid biosynthesis; S-adenosyl-L-methionine biosynthesis; S-adenosyl-L-methionine from L-methionine: step 1/1. Its function is as follows. Catalyzes the formation of S-adenosylmethionine (AdoMet) from methionine and ATP. The overall synthetic reaction is composed of two sequential steps, AdoMet formation and the subsequent tripolyphosphate hydrolysis which occurs prior to release of AdoMet from the enzyme. This chain is S-adenosylmethionine synthase, found in Shewanella woodyi (strain ATCC 51908 / MS32).